The chain runs to 67 residues: Potassium channel toxin alpha-KTx (67 aa).

The signal sequence occupies residues 1 to 25 (MKNIAMKTTVVLTILLLSVLTAINA). Positions 26–31 (DTMKKR) are excised as a propeptide. 4 disulfides stabilise this stretch: cysteine 35–cysteine 54, cysteine 40–cysteine 59, cysteine 44–cysteine 61, and cysteine 49–cysteine 64.

The protein belongs to the short scorpion toxin superfamily. Potassium channel inhibitor family. In terms of tissue distribution, expressed by the venom gland.

It localises to the secreted. Its function is as follows. Blocks Kv1.1/KCNA1, Kv1.2/KCNA2 and Kv1.3/KCNA3 voltage-gated potassium channels. This Hoffmannihadrurus gertschi (Scorpion) protein is Potassium channel toxin alpha-KTx.